A 491-amino-acid chain; its full sequence is UDP-N-acetylmuramoyl-L-alanyl-D-glutamate--2,6-diaminopimelate ligase (491 aa).

Residue Ser-30 coordinates UDP-N-acetyl-alpha-D-muramoyl-L-alanyl-D-glutamate. 108-114 contacts ATP; sequence GTNGKTT. Residues Asn-149, 150–151, Ser-177, Gln-183, and Arg-185 each bind UDP-N-acetyl-alpha-D-muramoyl-L-alanyl-D-glutamate; that span reads TT. Lys-217 carries the post-translational modification N6-carboxylysine. Meso-2,6-diaminopimelate-binding positions include Arg-383, 407-410, Gly-458, and Glu-462; that span reads DNPR. The short motif at 407-410 is the Meso-diaminopimelate recognition motif element; it reads DNPR.

Belongs to the MurCDEF family. MurE subfamily. It depends on Mg(2+) as a cofactor. Carboxylation is probably crucial for Mg(2+) binding and, consequently, for the gamma-phosphate positioning of ATP.

It is found in the cytoplasm. The enzyme catalyses UDP-N-acetyl-alpha-D-muramoyl-L-alanyl-D-glutamate + meso-2,6-diaminopimelate + ATP = UDP-N-acetyl-alpha-D-muramoyl-L-alanyl-gamma-D-glutamyl-meso-2,6-diaminopimelate + ADP + phosphate + H(+). Its pathway is cell wall biogenesis; peptidoglycan biosynthesis. Functionally, catalyzes the addition of meso-diaminopimelic acid to the nucleotide precursor UDP-N-acetylmuramoyl-L-alanyl-D-glutamate (UMAG) in the biosynthesis of bacterial cell-wall peptidoglycan. This is UDP-N-acetylmuramoyl-L-alanyl-D-glutamate--2,6-diaminopimelate ligase from Listeria monocytogenes serotype 4b (strain F2365).